A 119-amino-acid chain; its full sequence is U9-hexatoxin-Hi1 (119 aa).

Residues 1-17 form the signal peptide; sequence MKLYLVILVTSVALAAA. A propeptide spanning residues 18–53 is cleaved from the precursor; that stretch reads SPTRTKEEPIEDELLEALLSVEKSLFNEETTVMEKR. Disulfide bonds link cysteine 55–cysteine 73, cysteine 66–cysteine 79, cysteine 70–cysteine 117, and cysteine 72–cysteine 88.

It belongs to the neurotoxin 03 (Tx2) family. 03 subfamily. In terms of tissue distribution, expressed by the venom gland.

The protein localises to the secreted. Probable ion channel inhibitor. The protein is U9-hexatoxin-Hi1 of Hadronyche infensa (Fraser island funnel-web spider).